A 69-amino-acid polypeptide reads, in one-letter code: A-kinase anchor protein inhibitor 1 (69 aa).

A disordered region spans residues 39–69 (QESLRREGRPGDSRAWGQLGGCELTKKHEKK). Residues 41-50 (SLRREGRPGD) show a composition bias toward basic and acidic residues.

Binds cAMP-dependent protein kinase (PKA). Interacts specifically with RII-regulatory subunits of PKA (PRKAR2A and PRKAR2B). As to expression, preferentially expressed in the neural tissues.

In terms of biological role, protein kinase A (PKA)-binding protein. Binds to type II regulatory subunits of protein kinase A (PKA) and may block the A-kinase anchoring protein (AKAP)-mediated subcellular localization of PKA. The chain is A-kinase anchor protein inhibitor 1 from Mus musculus (Mouse).